A 348-amino-acid polypeptide reads, in one-letter code: Tetraacyldisaccharide 4'-kinase (348 aa).

54-61 (TVGGAGKT) serves as a coordination point for ATP.

It belongs to the LpxK family.

It catalyses the reaction a lipid A disaccharide + ATP = a lipid IVA + ADP + H(+). Its pathway is glycolipid biosynthesis; lipid IV(A) biosynthesis; lipid IV(A) from (3R)-3-hydroxytetradecanoyl-[acyl-carrier-protein] and UDP-N-acetyl-alpha-D-glucosamine: step 6/6. In terms of biological role, transfers the gamma-phosphate of ATP to the 4'-position of a tetraacyldisaccharide 1-phosphate intermediate (termed DS-1-P) to form tetraacyldisaccharide 1,4'-bis-phosphate (lipid IVA). The sequence is that of Tetraacyldisaccharide 4'-kinase from Agrobacterium fabrum (strain C58 / ATCC 33970) (Agrobacterium tumefaciens (strain C58)).